The following is a 311-amino-acid chain: Ribonuclease HIII (311 aa).

Residues 93-310 (LSAIGSDEVG…TKKALDIAKH (218 aa)) enclose the RNase H type-2 domain. A divalent metal cation contacts are provided by Asp-99, Glu-100, and Asp-204.

It belongs to the RNase HII family. RnhC subfamily. Mn(2+) serves as cofactor. It depends on Mg(2+) as a cofactor.

It localises to the cytoplasm. It catalyses the reaction Endonucleolytic cleavage to 5'-phosphomonoester.. Functionally, endonuclease that specifically degrades the RNA of RNA-DNA hybrids. The chain is Ribonuclease HIII from Geobacillus kaustophilus (strain HTA426).